The primary structure comprises 161 residues: Type IV major fimbrial protein FimA (161 aa).

Residues 1-7 (MKSLQKG) constitute a propeptide, leader sequence. Phe8 carries the N-methylphenylalanine modification. Residues 8–28 (FTLIELMIVVAIIGILAAFAI) form a helical membrane-spanning segment. Cysteines 63 and 106 form a disulfide.

Belongs to the N-Me-Phe pilin family. As to quaternary structure, the pili are polar flexible filaments of about 5.4 nanometers diameter and 2.5 micrometers average length; they consist of only a single polypeptide chain arranged in a helical configuration of five subunits per turn in the assembled pilus.

It is found in the fimbrium. Its subcellular location is the membrane. In terms of biological role, major component of the type IV fimbriae that plays an essential role in twitching motility, natural transformation, and protease secretion. This is Type IV major fimbrial protein FimA (fimA) from Dichelobacter nodosus (Bacteroides nodosus).